The chain runs to 474 residues: GTPase Der (474 aa).

EngA-type G domains lie at 3 to 167 and 204 to 379; these read LTIA…GSER and IRIA…RVWN. Residues 9–16, 56–60, 119–122, 210–217, 257–261, and 322–325 each bind GTP; these read GRPNVGKS, DTAGL, NKSE, GRPNTGKS, and NKWD. The KH-like domain maps to 380 to 464; the sequence is RRISTAKLNQ…PVRLSLRASD (85 aa).

This sequence belongs to the TRAFAC class TrmE-Era-EngA-EngB-Septin-like GTPase superfamily. EngA (Der) GTPase family. In terms of assembly, associates with the 50S ribosomal subunit.

Functionally, GTPase that plays an essential role in the late steps of ribosome biogenesis. This Bartonella tribocorum (strain CIP 105476 / IBS 506) protein is GTPase Der.